A 90-amino-acid polypeptide reads, in one-letter code: Leech factor Xa inhibitor (90 aa).

Its subcellular location is the secreted. Functionally, potent anticoagulant inhibiting the amidolytic activity of factor Xa (F10) (Ki=4nM) and reducing its ability to activate prothrombin (F2) in the prothrombinase complex (EC(50)=40nM). This is Leech factor Xa inhibitor from Haementeria depressa (Leech).